A 359-amino-acid polypeptide reads, in one-letter code: tRNA pseudouridine synthase B (359 aa).

D63 functions as the Nucleophile in the catalytic mechanism.

This sequence belongs to the pseudouridine synthase TruB family. Type 1 subfamily.

It catalyses the reaction uridine(55) in tRNA = pseudouridine(55) in tRNA. In terms of biological role, responsible for synthesis of pseudouridine from uracil-55 in the psi GC loop of transfer RNAs. The protein is tRNA pseudouridine synthase B of Psychrobacter cryohalolentis (strain ATCC BAA-1226 / DSM 17306 / VKM B-2378 / K5).